The sequence spans 579 residues: CTP synthase 1 (579 aa).

Residues 305–559 (KIALVGKYTN…LGLVAASAGI (255 aa)) form the Glutamine amidotransferase type-1 domain. C404 functions as the For GATase activity in the catalytic mechanism. Residue K422 forms a Glycyl lysine isopeptide (Lys-Gly) (interchain with G-Cter in ubiquitin) linkage. Residues H535 and E537 each act as for GATase activity in the active site.

Belongs to the CTP synthase family. In terms of assembly, homodimer. Oligomerizes to a tetramer in the presence of its substrates UTP and ATP.

It catalyses the reaction UTP + L-glutamine + ATP + H2O = CTP + L-glutamate + ADP + phosphate + 2 H(+). It participates in pyrimidine metabolism; CTP biosynthesis via de novo pathway; CTP from UDP: step 2/2. Activated by GTP and inhibited by CTP. Functionally, catalyzes the ATP-dependent amination of UTP to CTP with either L-glutamine or ammonia as the source of nitrogen. The chain is CTP synthase 1 (URA7) from Saccharomyces cerevisiae (strain ATCC 204508 / S288c) (Baker's yeast).